The sequence spans 745 residues: Probable xanthine dehydrogenase subunit D (745 aa).

Residues Gln204, Phe235, and Ala508 each coordinate Mo-molybdopterin.

This sequence belongs to the xanthine dehydrogenase family. Could be composed of four subunits: PucA, PucC, PucD and PucE. The cofactor is Mo-molybdopterin.

The catalysed reaction is xanthine + NAD(+) + H2O = urate + NADH + H(+). The enzyme catalyses hypoxanthine + NAD(+) + H2O = xanthine + NADH + H(+). It participates in purine metabolism; hypoxanthine degradation; urate from hypoxanthine: step 1/2. The protein operates within purine metabolism; hypoxanthine degradation; urate from hypoxanthine: step 2/2. Oxidizes hypoxanthine and xanthine to uric acid. This chain is Probable xanthine dehydrogenase subunit D (pucD), found in Bacillus subtilis (strain 168).